The chain runs to 101 residues: Small ribosomal subunit protein uS14 (101 aa).

It belongs to the universal ribosomal protein uS14 family. In terms of assembly, part of the 30S ribosomal subunit. Contacts proteins S3 and S10.

In terms of biological role, binds 16S rRNA, required for the assembly of 30S particles and may also be responsible for determining the conformation of the 16S rRNA at the A site. The protein is Small ribosomal subunit protein uS14 of Neisseria gonorrhoeae (strain ATCC 700825 / FA 1090).